The following is a 451-amino-acid chain: PTS system galactitol-specific EIIC component (451 aa).

The PTS EIIC type-2 domain occupies 6-435 (MRYILDLGPT…IYLTGIFMTW (430 aa)). A run of 10 helical transmembrane segments spans residues 9 to 29 (ILDL…SKIL), 41 to 61 (LHIG…LDSI), 92 to 112 (ASQI…AMLL), 138 to 158 (LATG…AFVY), 218 to 238 (FGPF…IGIL), 305 to 325 (AVVS…VCVP), 329 to 349 (VLPF…VAVH), 357 to 377 (LISG…TIGL), 392 to 412 (GMVA…IQVF), and 415 to 435 (QNIP…FMTW).

As to quaternary structure, forms a complex with one each of subunit of GatA, GatB and 2 subunits of GatC.

The protein resides in the cell inner membrane. In terms of biological role, the phosphoenolpyruvate-dependent sugar phosphotransferase system (PTS), a major carbohydrate active transport system, catalyzes the phosphorylation of incoming sugar substrates concomitant with their translocation across the cell membrane. The enzyme II complex composed of GatA, GatB and GatC is involved in galactitol transport. This chain is PTS system galactitol-specific EIIC component (gatC), found in Escherichia coli O157:H7.